Consider the following 591-residue polypeptide: MKYILVTGGVISGIGKGVIASSIGTILKSSNLHVTSIKIDPYINIDAGTFSPYEHGEVFVLDDGGEVDLDLGNYERFLDIRLTKDNNLTTGKIYQSVINKERKGDYLGKTVQVVPHITDAIQEWVMRQALIPVDEDGIEPEVCVIELGGTVGDIESMPFVEAFRQFQFKVRRENFCNIHVSLVPQPSATGEQKTKPTQNSVRELRGLGLSPDLVVCRCSTPLDTSVKEKISMFCHVEPQQVICVHDVSSIYRVPLLLEEQGVVDYFRQRLDLPIGRQPRRLLMKWKEMADRYERLLESCSIALVGKYTKFSDSYASVIKALEHSALAINHRLEIKYIDSADLEQETLQEEPVRYHEAWQKLCSSEGILVPGGFGVRGTEGKIQAIAWARKQKKPFLGVCLGMQLAVVEFARDVLGWTDANSTEFNPKTSHPVVIDMPEHNPGQMGGTMRLGKRRTIFHSQNSIMKKLYGGHEYVEERHRHRYEVNPELRRELEVRGLKFVGQDTEGERMEIVELEDHPYFVGVQYHPEFLSRPIKPSPPYFGLLLASVGRLSQYIERGCRLSPRDTYSDRSENSSPDAEIAELKLPMIDHD.

Residues 300 to 554 enclose the Glutamine amidotransferase type-1 domain; sequence SIALVGKYTK…LASVGRLSQY (255 aa). Catalysis depends on for GATase activity residues Cys399, His526, and Glu528.

This sequence belongs to the CTP synthase family.

The catalysed reaction is UTP + L-glutamine + ATP + H2O = CTP + L-glutamate + ADP + phosphate + 2 H(+). It functions in the pathway pyrimidine metabolism; CTP biosynthesis via de novo pathway; CTP from UDP: step 2/2. In terms of biological role, this enzyme is involved in the de novo synthesis of CTP, a precursor of DNA, RNA and phospholipids. Catalyzes the ATP-dependent amination of UTP to CTP with either L-glutamine or ammonia as a source of nitrogen. The polypeptide is CTP synthase 1-A (ctps1-a) (Xenopus laevis (African clawed frog)).